Here is a 322-residue protein sequence, read N- to C-terminus: tRNA-dihydrouridine(16) synthase (322 aa).

FMN is bound by residues 7-9 (PME) and Q68. C98 serves as the catalytic Proton donor. FMN-binding positions include K139, 200 to 202 (NGE), and 224 to 225 (CR).

This sequence belongs to the Dus family. DusC subfamily. The cofactor is FMN.

The catalysed reaction is 5,6-dihydrouridine(16) in tRNA + NADP(+) = uridine(16) in tRNA + NADPH + H(+). It carries out the reaction 5,6-dihydrouridine(16) in tRNA + NAD(+) = uridine(16) in tRNA + NADH + H(+). Functionally, catalyzes the synthesis of 5,6-dihydrouridine (D), a modified base found in the D-loop of most tRNAs, via the reduction of the C5-C6 double bond in target uridines. Specifically modifies U16 in tRNAs. This Vibrio parahaemolyticus serotype O3:K6 (strain RIMD 2210633) protein is tRNA-dihydrouridine(16) synthase.